The following is a 1378-amino-acid chain: Macrophage-stimulating protein receptor (1378 aa).

An N-terminal signal peptide occupies residues 1-23 (MGLPLPLLQSSLLLMLLLRLSAA). At 25–960 (TNLNWQCPRI…RSSPGRASQR (936 aa)) the chain is on the extracellular side. One can recognise a Sema domain in the interval 33–524 (RIPYAASRDF…SGDQVFKVPI (492 aa)). N91 carries N-linked (GlcNAc...) asparagine glycosylation. Cystine bridges form between C102–C105, C108–C163, C136–C144, C175–C178, C301–C368, C386–C409, and C387–C424. N391, N460, and N490 each carry an N-linked (GlcNAc...) asparagine glycan. Intrachain disulfides connect C529–C547, C535–C569, C538–C554, and C550–C560. IPT/TIG domains lie at 571–673 (PEIS…FRVE), 686–769 (PVLT…FHYK), and 772–864 (PIVL…FRFL). Residues N656, N722, N845, and N901 are each glycosylated (N-linked (GlcNAc...) asparagine). Residues 961–981 (ILLIALLVLILLVAVLAVALI) traverse the membrane as a helical segment. Residues 982 to 1378 (FNSRRRKKQL…RPLSEPPLPT (397 aa)) are Cytoplasmic-facing. A disordered region spans residues 1002-1026 (SDINDTASGAPNHEESSESRDGTSV). Over residues 1013-1022 (NHEESSESRD) the composition is skewed to basic and acidic residues. The 264-residue stretch at 1059 to 1322 (IHTDQVIGKG…ALVLEVKQVV (264 aa)) folds into the Protein kinase domain. ATP contacts are provided by residues 1065-1073 (IGKGHFGVV), K1091, and 1138-1141 (LPYM). D1185 acts as the Proton acceptor in catalysis. Position 1189 (R1189) interacts with ATP. Phosphotyrosine; by autocatalysis occurs at positions 1215, 1216, 1330, and 1337. The segment at 1347 to 1378 (DGSVPPEQVQPSPQHCRSTSKPRPLSEPPLPT) is disordered. A compositionally biased stretch (low complexity) spans 1349–1360 (SVPPEQVQPSPQ).

The protein belongs to the protein kinase superfamily. Tyr protein kinase family. Heterodimer of an alpha chain and a beta chain which are disulfide linked. Binds PLXNB1. Associates with and is negatively regulated by HYAL2. Interacts when phosphorylated with downstream effectors including PIK3R1, PCLG1, GRB2 and GAB1. Interacts with integrin beta1/ITGB1 in a ligand-independent fashion. Isoform sf-Stk forms covalent heterodimers with friend spleen focus-forming virus (FSFFV) gp55. Proteolytic processing yields the two subunits. In terms of processing, autophosphorylated in response to ligand binding on Tyr-1215 and Tyr-1216 in the kinase domain leading to further phosphorylation of Tyr-1330 and Tyr-1337 in the C-terminal multifunctional docking site. Post-translationally, ubiquitinated. Ubiquitination by CBL regulates the receptor stability and activity through proteasomal degradation. O-mannosylation of IPT/TIG domains on Thr or Ser residues by TMEM260 is required for protein maturation. O-mannosylated residues are composed of single mannose glycans that are not elongated or modified. In terms of tissue distribution, expressed in liver, skin, lung, brain, testis and kidney.

The protein localises to the membrane. The enzyme catalyses L-tyrosyl-[protein] + ATP = O-phospho-L-tyrosyl-[protein] + ADP + H(+). With respect to regulation, in its inactive state, the C-terminal tail interacts with the catalytic domain and inhibits the kinase activity. Upon ligand binding, the C-terminal tail is displaced and becomes phosphorylated, thus increasing the kinase activity. Receptor tyrosine kinase that transduces signals from the extracellular matrix into the cytoplasm by binding to MST1 ligand. Regulates many physiological processes including cell survival, migration and differentiation. Ligand binding at the cell surface induces autophosphorylation of RON on its intracellular domain that provides docking sites for downstream signaling molecules. Following activation by ligand, interacts with the PI3-kinase subunit PIK3R1, PLCG1 or the adapter GAB1. Recruitment of these downstream effectors by RON leads to the activation of several signaling cascades including the RAS-ERK, PI3 kinase-AKT, or PLCgamma-PKC. RON signaling activates the wound healing response by promoting epithelial cell migration, proliferation as well as survival at the wound site. Also plays a role in the innate immune response by regulating the migration and phagocytic activity of macrophages. Alternatively, RON can also promote signals such as cell migration and proliferation in response to growth factors other than MST1 ligand. This chain is Macrophage-stimulating protein receptor (Mst1r), found in Mus musculus (Mouse).